The primary structure comprises 359 residues: MSLSRLIIHQFRNINSATLDFNPKINVVVGPNGSGKTALLEAIYFLGLGRSFRTHLTSRVVEHESKSFTLFSEIQNNNGSIPIGLQKSKSGETLLKINGSYCKKLANLTQYLPLQLITPEGYTLLSGSPKNRRAFLDWGVFYHDPIFYPNWSRIKRLLKQRNAALKQCKTYNELQIWDNELCILSEEISQQREAYFELLMPLVKQTLADFLPDFSITSQFFCGWDKNNKSLQDYLFDNFYRDKQIGYTSAGPQKADLRFKINGIPVSDVLSRGQLKLFVYALRLAQGLFLNSFDNKQCVFLIDDFSSELDQNKQQILAKHIINSNAQIFISVIAAENIDRLFGQEQTVFHVEHGKITVE.

Residue 30-37 (GPNGSGKT) participates in ATP binding.

The protein belongs to the RecF family.

Its subcellular location is the cytoplasm. The RecF protein is involved in DNA metabolism; it is required for DNA replication and normal SOS inducibility. RecF binds preferentially to single-stranded, linear DNA. It also seems to bind ATP. The protein is DNA replication and repair protein RecF of Psychromonas ingrahamii (strain DSM 17664 / CCUG 51855 / 37).